A 428-amino-acid polypeptide reads, in one-letter code: Divergent protein kinase domain 1A (428 aa).

The Cytoplasmic segment spans residues 1 to 27; the sequence is MARGLFSRAWLSKTHHFQARLSYIRVK. The chain crosses the membrane as a helical span at residues 28-48; it reads YLFLTWLAVFVSSWVVYVQYS. The Lumenal portion of the chain corresponds to 49–428; that stretch reads TYTELCRGRE…WKQISHTTDS (380 aa).

It belongs to the DIPK family. Among the many cysteines in the lumenal domain, most are probably involved in disulfide bonds.

It localises to the endoplasmic reticulum membrane. The polypeptide is Divergent protein kinase domain 1A (dipk1a) (Danio rerio (Zebrafish)).